We begin with the raw amino-acid sequence, 414 residues long: Eukaryotic initiation factor 4A-3 (414 aa).

At Ala-2 the chain carries N-acetylalanine. The short motif at 41-69 (DSFDAMELQPDLLRGIYAYGFEKPSAIQQ) is the Q motif element. Residues 72-242 (IIPFCKGLDV…RKFMNKPVRI (171 aa)) enclose the Helicase ATP-binding domain. An ATP-binding site is contributed by 85–92 (AQSGTGKT). The residue at position 106 (Ser-106) is a Phosphoserine. At Thr-147 the chain carries Phosphothreonine. The short motif at 190-193 (DEAD) is the DEAD box element. In terms of domain architecture, Helicase C-terminal spans 253-414 (GIKQFYVNVD…ELPSNVADLL (162 aa)).

It belongs to the DEAD box helicase family. eIF4A subfamily. In terms of assembly, eIF4F is a multi-subunit complex, the composition of which varies with external and internal environmental conditions. It is composed of at least EIF4A, EIF4E and EIF4G.

The protein resides in the cytoplasm. The catalysed reaction is ATP + H2O = ADP + phosphate + H(+). ATP-dependent RNA helicase which is a subunit of the eIF4F complex involved in cap recognition and is required for mRNA binding to ribosome. In the current model of translation initiation, eIF4A unwinds RNA secondary structures in the 5'-UTR of mRNAs which is necessary to allow efficient binding of the small ribosomal subunit, and subsequent scanning for the initiator codon. In Arabidopsis thaliana (Mouse-ear cress), this protein is Eukaryotic initiation factor 4A-3 (TIF4A-3).